The primary structure comprises 644 residues: UvrABC system protein C (644 aa).

In terms of domain architecture, GIY-YIG spans 47–125 (ARPGVYRMLD…IKRYRPPYNV (79 aa)). Residues 235–270 (TAVQKRLGEAMTRAADAMDFEQAAVLRDRLKALTFI) enclose the UVR domain.

The protein belongs to the UvrC family. Interacts with UvrB in an incision complex.

The protein localises to the cytoplasm. The UvrABC repair system catalyzes the recognition and processing of DNA lesions. UvrC both incises the 5' and 3' sides of the lesion. The N-terminal half is responsible for the 3' incision and the C-terminal half is responsible for the 5' incision. The protein is UvrABC system protein C of Sphingopyxis alaskensis (strain DSM 13593 / LMG 18877 / RB2256) (Sphingomonas alaskensis).